The following is an 849-amino-acid chain: MLAAESSNKELFIKNDGKALSFPYDWKLATHVICDDFSSPNVQEGSKRSLRLAKTNWIRDCVDKNTLLNYSFYSCNPYLLFKGICASSCQIDSYQSSLIDDALETFGGRFSKGLMKSMTHLFTYSGMGAKCKKVLDKPSLSIKLIHPQWLLDCLQFGQLIDQDPYLFPNPSYKKNDSSISKAEPTSLFRNVLHGKRIYFSNDLNLPTNFRHSLQKFSVGIGAKIAESINDCDIFIGLKRDTIEFNLASNKNTTIGTISWLLNLFVLGSWKSPLLNALHYPFPSVGFLKDQMVAVTNYTDAARIYLEKLLLACGATYTKDLKPTNTLLIAASSYGQKYGAAKVWNIPTVHHSWLYSSFKNLSSQAFTDFPVPLDDSYMDFIFPCPLNVEKGSFEDTLKSSLTKGNSEVLLDDLSDPSVSSIKGNKTNEELEKEFKSTSDNFGKHIILTSSFSNQSADKGSSLAAEDDRNDEGSTITGVNRELQDEGRLEIDAKSSKTNTPPSPLLVGTPSKESLKEASSDDELPVLATKLVDNVIKEKSPLSLTPKVVVPSHKETYTDEKKLIDELDRVNPLNSSQLLRSKRKSAATALSMLQNVIMPDVLAFEREKKRRQTHRSVSSGEVSRESSESRNTNAKASKRVYITFTGYDKKPSIDNLKKLDMSITSNPSKCTHLIAPRILRTSKFLCSIPYGPCVVTMDWINSCLKTHEIVDEEPYLLNDPEKELELGCTLESALKRARAQGPSLLEDYVVYLTSKTVAPENVPAVISIVKSNGGVCSTLNVYNKRLARHLEDGNVVLITCNEDSHIWTNFLDNASQNKTIFLQNYDWLIKTVLRQEIDVNDRIADEFARAV.

3 consecutive BRCT domains span residues 1–75 (MLAA…FYSC), 76–167 (NPYL…PYLF), and 282–370 (PSVG…DFPV). Disordered regions lie at residues 453 to 519 (QSAD…ASSD) and 606 to 632 (KKRR…NTNA). The segment covering 480–493 (ELQDEGRLEIDAKS) has biased composition (basic and acidic residues). 2 consecutive BRCT domains span residues 625 to 715 (SESR…PYLL) and 738 to 843 (QGPS…RIAD).

Interacts with gammaH2A; binds phosphohistone H2A (gammaH2A) formed by Rad3/ATR checkpoint kinase at DNA lesions. Interacts with Rhp18/Rad18. Interacts with Nse5-Nse6; this allows to tether Smc5-Smc6 at replicative DNA lesions.

It is found in the nucleus. The protein localises to the chromosome. Functionally, required for resumption of chromosome replication after DNA damage, specifically in S phase. Is recruited to chromatin in response to stalled replication forks and acts as a scaffold during DNA repair. Required for the accumulation of the Smc5-Smc6 genome stability complex in foci during replication stress and for activation of the intrinsic SUMO ligase activity of the complex by collapsed replication forks. In pericentromeric heterochromatin, enhances Clr4/Suv39-mediated H3 Lys-9 dimethylation (H3K9me2), required for stabilization of stalled replication forks and accurate chromosome segregation during mitosis. Its function is as follows. Required for mitotic fidelity, specifically in the G2 phase of the cell cycle. Plays a role in chromatin organization. The chain is BRCT-containing protein 1 (brc1) from Schizosaccharomyces pombe (strain 972 / ATCC 24843) (Fission yeast).